A 90-amino-acid chain; its full sequence is Small ribosomal subunit protein uS15c (90 aa).

This sequence belongs to the universal ribosomal protein uS15 family. As to quaternary structure, part of the 30S ribosomal subunit.

The protein localises to the plastid. It is found in the chloroplast. This Lolium perenne (Perennial ryegrass) protein is Small ribosomal subunit protein uS15c (rps15-A).